We begin with the raw amino-acid sequence, 388 residues long: Na(+)/H(+) antiporter NhaA (388 aa).

11 helical membrane passes run 14–34 (GGII…MGAT), 59–79 (MLLW…GLEV), 95–115 (AFPV…YLAF), 125–145 (GWAI…ALLG), 154–174 (IFLM…IALF), 179–199 (LSIV…LLNL), 219–239 (VLKS…FIPL), 254–274 (VLHP…NAGV), 292–312 (IIAG…WLAL), 328–348 (IMAV…IASL), and 360–380 (WAKL…YSWL).

Belongs to the NhaA Na(+)/H(+) (TC 2.A.33) antiporter family.

It localises to the cell inner membrane. It catalyses the reaction Na(+)(in) + 2 H(+)(out) = Na(+)(out) + 2 H(+)(in). Functionally, na(+)/H(+) antiporter that extrudes sodium in exchange for external protons. This is Na(+)/H(+) antiporter NhaA from Salmonella paratyphi A (strain ATCC 9150 / SARB42).